Here is an 88-residue protein sequence, read N- to C-terminus: Defensin-like protein 267 (88 aa).

The signal sequence occupies residues 1-23 (MMLSKVVLLALLLSLSCLWVAKA). 3 disulfides stabilise this stretch: cysteine 45–cysteine 63, cysteine 51–cysteine 68, and cysteine 55–cysteine 70.

This sequence belongs to the DEFL family.

The protein localises to the secreted. This is Defensin-like protein 267 from Arabidopsis thaliana (Mouse-ear cress).